A 158-amino-acid polypeptide reads, in one-letter code: SsrA-binding protein (158 aa).

This sequence belongs to the SmpB family.

The protein resides in the cytoplasm. In terms of biological role, required for rescue of stalled ribosomes mediated by trans-translation. Binds to transfer-messenger RNA (tmRNA), required for stable association of tmRNA with ribosomes. tmRNA and SmpB together mimic tRNA shape, replacing the anticodon stem-loop with SmpB. tmRNA is encoded by the ssrA gene; the 2 termini fold to resemble tRNA(Ala) and it encodes a 'tag peptide', a short internal open reading frame. During trans-translation Ala-aminoacylated tmRNA acts like a tRNA, entering the A-site of stalled ribosomes, displacing the stalled mRNA. The ribosome then switches to translate the ORF on the tmRNA; the nascent peptide is terminated with the 'tag peptide' encoded by the tmRNA and targeted for degradation. The ribosome is freed to recommence translation, which seems to be the essential function of trans-translation. This is SsrA-binding protein from Bartonella tribocorum (strain CIP 105476 / IBS 506).